The primary structure comprises 159 residues: ATP synthase subunit b (159 aa).

Residues N2–V22 form a helical membrane-spanning segment.

It belongs to the ATPase B chain family. As to quaternary structure, F-type ATPases have 2 components, F(1) - the catalytic core - and F(0) - the membrane proton channel. F(1) has five subunits: alpha(3), beta(3), gamma(1), delta(1), epsilon(1). F(0) has three main subunits: a(1), b(2) and c(10-14). The alpha and beta chains form an alternating ring which encloses part of the gamma chain. F(1) is attached to F(0) by a central stalk formed by the gamma and epsilon chains, while a peripheral stalk is formed by the delta and b chains.

The protein resides in the cell membrane. F(1)F(0) ATP synthase produces ATP from ADP in the presence of a proton or sodium gradient. F-type ATPases consist of two structural domains, F(1) containing the extramembraneous catalytic core and F(0) containing the membrane proton channel, linked together by a central stalk and a peripheral stalk. During catalysis, ATP synthesis in the catalytic domain of F(1) is coupled via a rotary mechanism of the central stalk subunits to proton translocation. Functionally, component of the F(0) channel, it forms part of the peripheral stalk, linking F(1) to F(0). The polypeptide is ATP synthase subunit b (Clostridium botulinum (strain Okra / Type B1)).